We begin with the raw amino-acid sequence, 557 residues long: Urocanate hydratase (557 aa).

A disordered region spans residues 1–20 (MSNPRHNEREVRSPRGDELN). NAD(+) is bound by residues 52-53 (GG), Gln130, 176-178 (GMG), Glu196, Arg201, 242-243 (NA), 263-267 (QTSAH), 273-274 (YL), and Tyr322. Residue Cys410 is part of the active site. Position 492 (Gly492) interacts with NAD(+).

This sequence belongs to the urocanase family. The cofactor is NAD(+).

Its subcellular location is the cytoplasm. It carries out the reaction 4-imidazolone-5-propanoate = trans-urocanate + H2O. Its pathway is amino-acid degradation; L-histidine degradation into L-glutamate; N-formimidoyl-L-glutamate from L-histidine: step 2/3. Functionally, catalyzes the conversion of urocanate to 4-imidazolone-5-propionate. The polypeptide is Urocanate hydratase (Brucella melitensis biotype 2 (strain ATCC 23457)).